The following is a 1086-amino-acid chain: MSDEKISMTLNFPKHKRARRKKYQKEYQERHKEEMMQQLGRRFQNQPSTSSAPPDTVEKIPLPTESTSALPFGDSPRLTEKDYETNYMIDPPVVSTHSAELIKSNRVVIKAEEAEKYMMIKAKSTTSKILQDFQTKILETVKTKRRLQADVPYIIHPCHSMKGRKTPKQKGGDESFTASDVSDDSNDSQDEASTSEPTNRQAPEADKTGEVKDEKQTCNRRNQQRKAKRLRNFEEKERQITLLKKGIDRKKTHPNGIHPDISFNEKGLGNEGPECRCPEPIKTCGLKHGYYAGEDKAIDCKKSNGENLHYYTLRVTPLPSENQLYRTHMAINGEEFEFEGFSLITHAPLPDCMTRAPICKYSMDYEFQLVEEFMPDECFDPEDCDMLFEYIFHEIFEMLDFELRPKHIPSDVESCPMIHIMPRFVQTKDDLVQLWSSKTVLAYFTSKGSSEIMSPEDVNRLCDAQIDQFTRNTSKHKQSIVLNTKFKPSAIRADWFERDEEKKEVYVVHNAIRAQTYTAISLPRIAFLEKTLNKMIQEKQSSGVYNKDFEKTKNELEHLKRENRSARNLKLREPVAGFIETGLKPDVAAHVVMTILACHHIRYNFSLDVFEEVIEYKFNDRRVIELALMHSSFKSHYGTPIDHVKNMITNCGYRRKYGAEDKREKKRVAGIMSLFNIMKGTSGGEPILHNERLEYLGDAVVELIVSHHLYFMLTHHFEGGLATYRTALVQNRNLATLAKNCRIDEMLQYSHGADLINVAEFKHALANAFEAVMAAIYLDGGLAPCDVIFSKAMYGHQPVLKEKWDHINEHELKREDPQGDRDLSFITPTLSTFHALEERLGIQFNNIRLLAKAFTRRNIPNNDLTKGHNQRLEWLGDSVLQLIVSDFLYRRFPYHHEGHMSLLRTSLVSNQTQAVVCDDLGFTEFVIKAPYKTPELKLKDKADLVEAFIGALYVDRGIEHCRAFIRIVFCPRLKHFIESEKWNDAKSHLQQWCLAMRDPSSSEPDMPEYRVLGIEGPTNNRIFKIAVYYKGKRLASAAESNVHKAELRVAELALANLESMSFSKMKAKNNSWFQNMRRRLEQDTSD.

Disordered stretches follow at residues 1–77 and 158–233; these read MSDE…DSPR and CHSM…LRNF. The segment covering 13–23 has biased composition (basic residues); that stretch reads PKHKRARRKKY. Over residues 24–35 the composition is skewed to basic and acidic residues; the sequence is QKEYQERHKEEM. A compositionally biased stretch (polar residues) spans 43-53; it reads FQNQPSTSSAP. Basic residues predominate over residues 159-168; sequence HSMKGRKTPK. Over residues 181–190 the composition is skewed to acidic residues; sequence VSDDSNDSQD. The segment covering 191–201 has biased composition (polar residues); that stretch reads EASTSEPTNRQ. A compositionally biased stretch (basic and acidic residues) spans 203-217; the sequence is PEADKTGEVKDEKQT. RNase III domains follow at residues 607–781 and 833–957; these read LDVF…LDGG and FHAL…VDRG. 6 residues coordinate Mg(2+): Glu-694, Asn-767, Glu-770, Glu-873, Asp-943, and Glu-946. Positions 984 to 1059 constitute a DRBM domain; that stretch reads DAKSHLQQWC…AELALANLES (76 aa).

Belongs to the ribonuclease III family. Requires Mg(2+) as cofactor. Mn(2+) is required as a cofactor.

It is found in the nucleus. The enzyme catalyses Endonucleolytic cleavage to 5'-phosphomonoester.. Executes the initial step of microRNA (miRNA) processing in the nucleus, that is the cleavage of pri-miRNA to release pre-miRNA. Involved in pre-rRNA processing. Cleaves double-strand RNA and does not cleave single-strand RNA. Involved in fertility. Required for the function or synthesis of the let-7 miRNA. The chain is Ribonuclease 3 (drsh-1) from Caenorhabditis elegans.